The primary structure comprises 395 residues: Elongation factor Tu (395 aa).

One can recognise a tr-type G domain in the interval 10–204 (KPHLNIGTIG…AVDNWIEEPV (195 aa)). A G1 region spans residues 19–26 (GHVDHGKT). 19 to 26 (GHVDHGKT) contributes to the GTP binding site. Thr-26 serves as a coordination point for Mg(2+). Residues 60–64 (GITIN) form a G2 region. Positions 81–84 (DCPG) are G3. Residues 81 to 85 (DCPGH) and 136 to 139 (NKVD) each bind GTP. The segment at 136 to 139 (NKVD) is G4. The tract at residues 174–176 (SAL) is G5.

It belongs to the TRAFAC class translation factor GTPase superfamily. Classic translation factor GTPase family. EF-Tu/EF-1A subfamily. In terms of assembly, monomer.

The protein localises to the cytoplasm. The enzyme catalyses GTP + H2O = GDP + phosphate + H(+). GTP hydrolase that promotes the GTP-dependent binding of aminoacyl-tRNA to the A-site of ribosomes during protein biosynthesis. The chain is Elongation factor Tu from Flavobacterium johnsoniae (strain ATCC 17061 / DSM 2064 / JCM 8514 / BCRC 14874 / CCUG 350202 / NBRC 14942 / NCIMB 11054 / UW101) (Cytophaga johnsonae).